A 126-amino-acid chain; its full sequence is MNNKYAEYLPIAIQLMVTLGFISVTLLSSWLLGPKVKSKKKLDAFESGLDPVGNARVQFSIKYFLVATLFVLFDVEVIFFYPWAVNFNYFAEAVNKWEGFVKMLLFMTSLLIGFIYVIKKKALDWE.

Transmembrane regions (helical) follow at residues 11–31 (IAIQ…SSWL), 64–84 (FLVA…YPWA), and 98–118 (EGFV…IYVI).

This sequence belongs to the complex I subunit 3 family. In terms of assembly, NDH-1 is composed of 14 different subunits. Subunits NuoA, H, J, K, L, M, N constitute the membrane sector of the complex.

It is found in the cell inner membrane. It carries out the reaction a quinone + NADH + 5 H(+)(in) = a quinol + NAD(+) + 4 H(+)(out). Functionally, NDH-1 shuttles electrons from NADH, via FMN and iron-sulfur (Fe-S) centers, to quinones in the respiratory chain. The immediate electron acceptor for the enzyme in this species is believed to be a menaquinone. Couples the redox reaction to proton translocation (for every two electrons transferred, four hydrogen ions are translocated across the cytoplasmic membrane), and thus conserves the redox energy in a proton gradient. The chain is NADH-quinone oxidoreductase subunit A from Cytophaga hutchinsonii (strain ATCC 33406 / DSM 1761 / CIP 103989 / NBRC 15051 / NCIMB 9469 / D465).